Reading from the N-terminus, the 336-residue chain is Pyridoxal 5'-phosphate synthase subunit PdxS (336 aa).

Asp-30 serves as a coordination point for D-ribose 5-phosphate. The active-site Schiff-base intermediate with D-ribose 5-phosphate is Lys-87. Gly-159 contributes to the D-ribose 5-phosphate binding site. Arg-171 is a D-glyceraldehyde 3-phosphate binding site. Residues Gly-257 and 278–279 each bind D-ribose 5-phosphate; that span reads GS.

It belongs to the PdxS/SNZ family. As to quaternary structure, in the presence of PdxT, forms a dodecamer of heterodimers.

The enzyme catalyses aldehydo-D-ribose 5-phosphate + D-glyceraldehyde 3-phosphate + L-glutamine = pyridoxal 5'-phosphate + L-glutamate + phosphate + 3 H2O + H(+). It functions in the pathway cofactor biosynthesis; pyridoxal 5'-phosphate biosynthesis. Its function is as follows. Catalyzes the formation of pyridoxal 5'-phosphate from ribose 5-phosphate (RBP), glyceraldehyde 3-phosphate (G3P) and ammonia. The ammonia is provided by the PdxT subunit. Can also use ribulose 5-phosphate and dihydroxyacetone phosphate as substrates, resulting from enzyme-catalyzed isomerization of RBP and G3P, respectively. The polypeptide is Pyridoxal 5'-phosphate synthase subunit PdxS (Thermoplasma acidophilum (strain ATCC 25905 / DSM 1728 / JCM 9062 / NBRC 15155 / AMRC-C165)).